A 406-amino-acid polypeptide reads, in one-letter code: MAPARCFSARLRTVFQGVGHWALSTWAGLKPSRLLPQRASPRLLSVGRADLAKHQELPGKKLLSEKKLKRYFVDYRRVLVCGGNGGAGASCFHSEPRKEFGGPDGGDGGNGGHVILRVDQQVKSLSSVLSRYQGFSGEDGGSKNCFGRSGAVLYIRVPVGTLVKEGGRVVADLSCVGDEYIAALGGAGGKGNRFFLANNNRAPVTCTPGQPGQQRVLHLELKTVAHAGMVGFPNAGKSSLLRAISNARPAVASYPFTTLKPHVGIVHYEGHLQIAVADIPGIIRGAHQNRGLGSAFLRHIERCRFLLFVVDLSQPEPWTQVDDLKYELEMYEKGLSARPHAIVANKIDLPEAQANLSQLRDHLGQEVIVLSALTGENLEQLLLHLKVLYDAYAEAELGQGRQPLRW.

The segment at 15–406 (FQGVGHWALS…LGQGRQPLRW (392 aa)) is localized in the mitochondria. A not localized in the mitochondria region spans residues 30–406 (KPSRLLPQRA…LGQGRQPLRW (377 aa)). An Obg domain is found at 70-224 (RYFVDYRRVL…RVLHLELKTV (155 aa)). Residues 225–390 (AHAGMVGFPN…LLLHLKVLYD (166 aa)) enclose the OBG-type G domain. GTP contacts are provided by residues 231-238 (GFPNAGKS), 256-260 (FTTLK), 278-281 (DIPG), 345-348 (NKID), and 371-373 (SAL). Ser238 and Thr258 together coordinate Mg(2+).

It belongs to the TRAFAC class OBG-HflX-like GTPase superfamily. OBG GTPase family. As to quaternary structure, associates with the mitochondrial ribosome large subunit; the association occurs in a GTP-dependent manner. Requires Mg(2+) as cofactor.

The protein resides in the mitochondrion. It is found in the mitochondrion inner membrane. In terms of biological role, plays a role in the regulation of the mitochondrial ribosome assembly and of translational activity. Displays GTPase activity. Involved in the ribosome maturation process. The polypeptide is Mitochondrial ribosome-associated GTPase 2 (MTG2) (Homo sapiens (Human)).